The sequence spans 195 residues: Peptidyl-tRNA hydrolase (195 aa).

A tRNA-binding site is contributed by Tyr17. Residue His22 is the Proton acceptor of the active site. TRNA contacts are provided by Phe68, Asn70, and Asn116.

This sequence belongs to the PTH family. As to quaternary structure, monomer.

It localises to the cytoplasm. The catalysed reaction is an N-acyl-L-alpha-aminoacyl-tRNA + H2O = an N-acyl-L-amino acid + a tRNA + H(+). Its function is as follows. Hydrolyzes ribosome-free peptidyl-tRNAs (with 1 or more amino acids incorporated), which drop off the ribosome during protein synthesis, or as a result of ribosome stalling. Catalyzes the release of premature peptidyl moieties from peptidyl-tRNA molecules trapped in stalled 50S ribosomal subunits, and thus maintains levels of free tRNAs and 50S ribosomes. This Pectobacterium atrosepticum (strain SCRI 1043 / ATCC BAA-672) (Erwinia carotovora subsp. atroseptica) protein is Peptidyl-tRNA hydrolase.